The sequence spans 321 residues: Torsin-2A (321 aa).

A signal peptide spans 1 to 26; the sequence is MAAATRSCRPWGSLLGLIWLVSAAAA. 93–100 contacts ATP; that stretch reads GWTGTGKS. An N-linked (GlcNAc...) asparagine glycan is attached at N149.

The protein belongs to the ClpA/ClpB family. Torsin subfamily. In terms of assembly, homohexamer. Interacts with TOR1AIP1.

It localises to the endoplasmic reticulum lumen. The sequence is that of Torsin-2A (TOR2A) from Bos taurus (Bovine).